The primary structure comprises 421 residues: Type II methyltransferase M.TaqI (421 aa).

Residues 1 to 18 (MGLPPLLSLPSNSAPRSL) show a composition bias toward low complexity. Residues 1–20 (MGLPPLLSLPSNSAPRSLGR) are disordered. S-adenosyl-L-methionine-binding positions include Thr-23, 45–48 (EPAC), Glu-71, Asp-89, and Pro-107.

The protein belongs to the N(4)/N(6)-methyltransferase family.

It catalyses the reaction a 2'-deoxyadenosine in DNA + S-adenosyl-L-methionine = an N(6)-methyl-2'-deoxyadenosine in DNA + S-adenosyl-L-homocysteine + H(+). Functionally, a gamma subtype methylase that recognizes the double-stranded sequence 5'-TCGA-3', methylates A-4 on both strands and protects the DNA from cleavage by the TaqI endonuclease. The chain is Type II methyltransferase M.TaqI (taqIM) from Thermus aquaticus.